The chain runs to 381 residues: Cell division protein FtsZ (381 aa).

The interval 1-25 is disordered; the sequence is MKFINDAIKESEKREKPSSSSMNSE. Positions 7-17 are enriched in basic and acidic residues; that stretch reads AIKESEKREKP. Residues 48–52, 135–137, Glu-166, Arg-170, and Asp-213 each bind GTP; these read GAGNN and GTG.

This sequence belongs to the FtsZ family. In terms of assembly, homodimer. Polymerizes to form a dynamic ring structure in a strictly GTP-dependent manner. Interacts directly with several other division proteins.

The protein resides in the cytoplasm. Its function is as follows. Essential cell division protein that forms a contractile ring structure (Z ring) at the future cell division site. The regulation of the ring assembly controls the timing and the location of cell division. One of the functions of the FtsZ ring is to recruit other cell division proteins to the septum to produce a new cell wall between the dividing cells. Binds GTP and shows GTPase activity. In Methanothermobacter thermautotrophicus (strain ATCC 29096 / DSM 1053 / JCM 10044 / NBRC 100330 / Delta H) (Methanobacterium thermoautotrophicum), this protein is Cell division protein FtsZ.